The following is a 308-amino-acid chain: D-alanine--D-alanine ligase (308 aa).

The ATP-grasp domain maps to 109 to 302 (KAAYAAAGLP…FGALCRWIVE (194 aa)). 136 to 186 (MPPPYVIKPYNEGSSVGVYLVPEGAEAAPELADDLPDTLMVEAFVPGRELT) is a binding site for ATP. Mg(2+)-binding residues include aspartate 253, glutamate 269, and asparagine 271.

The protein belongs to the D-alanine--D-alanine ligase family. Mg(2+) is required as a cofactor. Requires Mn(2+) as cofactor.

It is found in the cytoplasm. The catalysed reaction is 2 D-alanine + ATP = D-alanyl-D-alanine + ADP + phosphate + H(+). The protein operates within cell wall biogenesis; peptidoglycan biosynthesis. Functionally, cell wall formation. This chain is D-alanine--D-alanine ligase, found in Dinoroseobacter shibae (strain DSM 16493 / NCIMB 14021 / DFL 12).